A 430-amino-acid polypeptide reads, in one-letter code: MFRTISNIFRVGDLRRKVIFTLLMLIVFRIGSFIPVPGTNREVLDFVDQANAFGFLNTFGGGALGNFSIFAMGIMPYITASIVMQLLQMDVVPKFAEWAKEGEAGRRKLAQFTRYGTIVLGFIQALGMSVGFNNFFPGLIPNPSVSVYLFIALVLTAGTAFLMWLGEQITAKGVGNGISIIIFAGIAAGIPNGLNLIYSTRIQDAGEQLFLNIVVILLLALAILAIIVGVIFVQQALRKIPVQYAKRLVGRNPVGGQSTHLPLKVNAAGVIPVIFALSLFIFPPTVAGLFGSDHPVAAWVIETFDYTHPIGMAVYALLIIGFTYFYTFIQVNPERMAENLKKQGGYIPGIRPGKATQTYITRILYRLTFVGSLFLAVVAILPVFFIKFADLPQAIQIGGTGLLIVVGVALDTMKQIEAQLIKRSYKGFIK.

The next 10 helical transmembrane spans lie at 18 to 38, 67 to 87, 118 to 138, 145 to 165, 177 to 197, 213 to 233, 270 to 290, 309 to 329, 369 to 389, and 390 to 410; these read VIFT…PVPG, FSIF…MQLL, IVLG…FFPG, VSVY…LMWL, GISI…LNLI, IVVI…VIFV, VIPV…AGLF, PIGM…YTFI, FVGS…IKFA, and DLPQ…GVAL.

It belongs to the SecY/SEC61-alpha family. Component of the Sec protein translocase complex. Heterotrimer consisting of SecY, SecE and SecG subunits. The heterotrimers can form oligomers, although 1 heterotrimer is thought to be able to translocate proteins. Interacts with the ribosome. Interacts with SecDF, and other proteins may be involved. Interacts with SecA.

The protein localises to the cell membrane. Functionally, the central subunit of the protein translocation channel SecYEG. Consists of two halves formed by TMs 1-5 and 6-10. These two domains form a lateral gate at the front which open onto the bilayer between TMs 2 and 7, and are clamped together by SecE at the back. The channel is closed by both a pore ring composed of hydrophobic SecY resides and a short helix (helix 2A) on the extracellular side of the membrane which forms a plug. The plug probably moves laterally to allow the channel to open. The ring and the pore may move independently. The protein is Protein translocase subunit SecY of Halalkalibacterium halodurans (strain ATCC BAA-125 / DSM 18197 / FERM 7344 / JCM 9153 / C-125) (Bacillus halodurans).